A 1474-amino-acid polypeptide reads, in one-letter code: Adhesion G protein-coupled receptor L1 (1474 aa).

The signal sequence occupies residues 1–24 (MARLAAVLWNLCVTAVLVTSATQG). The Extracellular portion of the chain corresponds to 25 to 858 (LSRAGLPFGL…EIYQGRINEL (834 aa)). Residues 40 to 129 (ACEGYPIELR…KYLEVQYDCV (90 aa)) form the SUEL-type lectin domain. 5 cysteine pairs are disulfide-bonded: Cys-41/Cys-71, Cys-50/Cys-128, Cys-83/Cys-115, Cys-96/Cys-102, and Cys-140/Cys-322. Glu-42 is a binding site for alpha-L-rhamnose. Residue Asn-98 is glycosylated (N-linked (GlcNAc...) asparagine). 117–120 (GTYK) provides a ligand contact to alpha-L-rhamnose. An Olfactomedin-like domain is found at 139-398 (VCPGTLQKVL…VVRYSLEFGP (260 aa)). The segment at 400-434 (DPSAGPATSPPLSTTTTARPTPLTSTASPAATTPL) is disordered. Positions 405–434 (PATSPPLSTTTTARPTPLTSTASPAATTPL) are enriched in low complexity. Cystine bridges form between Cys-480–Cys-515 and Cys-503–Cys-532. 6 N-linked (GlcNAc...) asparagine glycosylation sites follow: Asn-531, Asn-640, Asn-742, Asn-801, Asn-806, and Asn-827. In terms of domain architecture, GAIN-B spans 669 to 851 (PARFLAAKEN…AVLMAHREIY (183 aa)). 2 disulfides stabilise this stretch: Cys-802–Cys-833 and Cys-821–Cys-835. The interval 802-851 (CSFWNYSERSMLGYWSTQGCRLVESNKTHTTCACSHLTNFAVLMAHREIY) is GPS. Residues 859-879 (LLSVITWVGIVISLVCLAICI) traverse the membrane as a helical segment. Residues 880–893 (STFCFLRGLQTDRN) are Cytoplasmic-facing. The chain crosses the membrane as a helical span at residues 894 to 914 (TIHKNLCINLFLAELLFLVGI). Over 915-920 (DKTQYE) the chain is Extracellular. Residues 921-941 (IACPIFAGLLHYFFLAAFSWL) traverse the membrane as a helical segment. Residues 942–964 (CLEGVHLYLLLVEVFESEYSRTK) are Cytoplasmic-facing. The helical transmembrane segment at 965-985 (YYYLGGYCFPALVVGIAAAID) threads the bilayer. The Extracellular portion of the chain corresponds to 986 to 1002 (YRSYGTEKACWLRVDNY). The helical transmembrane segment at 1003-1023 (FIWSFIGPVSFVIVVNLVFLM) threads the bilayer. Residues 1024–1050 (VTLHKMIRSSSVLKPDSSRLDNIKSWA) are Cytoplasmic-facing. A helical transmembrane segment spans residues 1051-1071 (LGAIALLFLLGLTWAFGLLFI). Residues 1072–1075 (NKES) lie on the Extracellular side of the membrane. Residues 1076–1096 (VVMAYLFTTFNAFQGVFIFVF) form a helical membrane-spanning segment. At 1097–1474 (HCALQKKVHK…DGQMQLVTSL (378 aa)) the chain is on the cytoplasmic side. Arg-1194 is subject to Omega-N-methylarginine. The residue at position 1220 (Ser-1220) is a Phosphoserine. Disordered regions lie at residues 1248–1273 (FNNSYSLRSGDFPPGDGGPEPPRGRN), 1294–1328 (RGSSSAAKGPPPPEPPVPPVPGGGGEEEAGGPGGA), 1360–1429 (ESES…SRPP), and 1451–1474 (YLAAPGLEGPGPDGDGQMQLVTSL). Pro residues-rich tracts occupy residues 1302-1314 (GPPPPEPPVPPVP) and 1408-1420 (ALPPPPPAPPGPP). Ser-1473 is subject to Phosphoserine.

The protein belongs to the G-protein coupled receptor 2 family. Adhesion G-protein coupled receptor (ADGR) subfamily. In terms of assembly, forms a heterodimer, consisting of a large extracellular region (p120) non-covalently linked to a seven-transmembrane moiety (p85). Interacts with syntaxin and with proteins of the SHANK family via the PDZ domain. Interacts (via extracellular domain) with FLRT1, FLRT2 and FLRT3 (via extracellular domain). Autoproteolytically cleaved into 2 subunits, an extracellular subunit and a seven-transmembrane subunit. This proteolytic processing takes place early in the biosynthetic pathway, either in the endoplasmic reticulum or in the early compartment of the Golgi apparatus.

It localises to the cell membrane. The protein resides in the cell projection. Its subcellular location is the axon. It is found in the growth cone. The protein localises to the synapse. It localises to the presynaptic cell membrane. The protein resides in the synaptosome. Functionally, calcium-independent receptor of high affinity for alpha-latrotoxin, an excitatory neurotoxin present in black widow spider venom which triggers massive exocytosis from neurons and neuroendocrine cells. Receptor for TENM2 that mediates heterophilic synaptic cell-cell contact and postsynaptic specialization. Receptor probably implicated in the regulation of exocytosis. The protein is Adhesion G protein-coupled receptor L1 of Homo sapiens (Human).